We begin with the raw amino-acid sequence, 393 residues long: ATP phosphoribosyltransferase regulatory subunit (393 aa).

The protein belongs to the class-II aminoacyl-tRNA synthetase family. HisZ subfamily. As to quaternary structure, heteromultimer composed of HisG and HisZ subunits.

Its subcellular location is the cytoplasm. Its pathway is amino-acid biosynthesis; L-histidine biosynthesis; L-histidine from 5-phospho-alpha-D-ribose 1-diphosphate: step 1/9. Its function is as follows. Required for the first step of histidine biosynthesis. May allow the feedback regulation of ATP phosphoribosyltransferase activity by histidine. This chain is ATP phosphoribosyltransferase regulatory subunit, found in Synechococcus sp. (strain RCC307).